The following is a 330-amino-acid chain: Trans-1,2-dihydrobenzene-1,2-diol dehydrogenase (330 aa).

The protein belongs to the Gfo/Idh/MocA family. As to quaternary structure, homodimer.

The catalysed reaction is (1R,2R)-1,2-dihydrobenzene-1,2-diol + NADP(+) = catechol + NADPH + H(+). It carries out the reaction D-xylose + NADP(+) = D-xylono-1,5-lactone + NADPH + H(+). The polypeptide is Trans-1,2-dihydrobenzene-1,2-diol dehydrogenase (dhdh) (Xenopus tropicalis (Western clawed frog)).